An 822-amino-acid polypeptide reads, in one-letter code: Valine--tRNA ligase (822 aa).

A 'HIGH' region motif is present at residues 41–51 (PNVTGQLHLGH). A 'KMSKS' region motif is present at residues 511–515 (KMSKS). Lysine 514 provides a ligand contact to ATP. Positions 765 to 822 (EQKGRELKEIQFLKSEILRAEKILTNKGFLEKAPREKIDLERTKLEKLKEKLAFYEKK) form a coiled coil.

The protein belongs to the class-I aminoacyl-tRNA synthetase family. ValS type 1 subfamily. Monomer.

The protein localises to the cytoplasm. It catalyses the reaction tRNA(Val) + L-valine + ATP = L-valyl-tRNA(Val) + AMP + diphosphate. Functionally, catalyzes the attachment of valine to tRNA(Val). As ValRS can inadvertently accommodate and process structurally similar amino acids such as threonine, to avoid such errors, it has a 'posttransfer' editing activity that hydrolyzes mischarged Thr-tRNA(Val) in a tRNA-dependent manner. The polypeptide is Valine--tRNA ligase (Mesomycoplasma hyopneumoniae (strain 7448) (Mycoplasma hyopneumoniae)).